The primary structure comprises 429 residues: MEIVFEDFQKALSKIKLLRENANIIEETVQRNVSEIVRNVRESGDEALSFYTKKFDGVKIKEFRVSEEEEKRASMFVENSFLEALQEAKKNIISYHEKQKRQSMFDCASEGIIRGQIIRPLENVGVYVPGGTASYPSSVLMNVLPAKLAGVKKIVMVTPPREGGIDPHILVAASLAGVDEIYTIGGAQAIAALAYGTESIPKVDKIVGPGNLYVALAKREVYGIVNIDMIAGPSEIVVIADETGNAKYIAADLLSQAEHDERATAICITTNIELAKKVEKEIERQLETLPRSEIARESINRNGAIFIVPSIDEALQLSNEIAPEHLELHIKEPMNALAYVKHAGSIFLGPYAPEPLGDYLAGPNHVLPTSGTARFFSPLSVDDFVKKSSFLSYTEEALRDVQHHIVELANKEGLHAHARAIQIRFEEEE.

Residues Tyr-127, Gln-188, and Asn-211 each coordinate NAD(+). The substrate site is built by Ser-234, Gln-256, and His-259. 2 residues coordinate Zn(2+): Gln-256 and His-259. Active-site proton acceptor residues include Glu-324 and His-325. Positions 325, 358, 412, and 417 each coordinate substrate. Asp-358 provides a ligand contact to Zn(2+). Zn(2+) is bound at residue His-417.

It belongs to the histidinol dehydrogenase family. Zn(2+) is required as a cofactor.

It carries out the reaction L-histidinol + 2 NAD(+) + H2O = L-histidine + 2 NADH + 3 H(+). Its pathway is amino-acid biosynthesis; L-histidine biosynthesis; L-histidine from 5-phospho-alpha-D-ribose 1-diphosphate: step 9/9. Catalyzes the sequential NAD-dependent oxidations of L-histidinol to L-histidinaldehyde and then to L-histidine. The polypeptide is Histidinol dehydrogenase (Bacillus cereus (strain ATCC 10987 / NRS 248)).